The primary structure comprises 426 residues: Serine--tRNA ligase (426 aa).

230–232 lines the L-serine pocket; it reads TAE. Position 261–263 (261–263) interacts with ATP; the sequence is RSE. Residue Glu-284 coordinates L-serine. Residue 348–351 participates in ATP binding; it reads EISS. Ser-384 lines the L-serine pocket.

This sequence belongs to the class-II aminoacyl-tRNA synthetase family. Type-1 seryl-tRNA synthetase subfamily. Homodimer. The tRNA molecule binds across the dimer.

Its subcellular location is the cytoplasm. The enzyme catalyses tRNA(Ser) + L-serine + ATP = L-seryl-tRNA(Ser) + AMP + diphosphate + H(+). It carries out the reaction tRNA(Sec) + L-serine + ATP = L-seryl-tRNA(Sec) + AMP + diphosphate + H(+). It functions in the pathway aminoacyl-tRNA biosynthesis; selenocysteinyl-tRNA(Sec) biosynthesis; L-seryl-tRNA(Sec) from L-serine and tRNA(Sec): step 1/1. Catalyzes the attachment of serine to tRNA(Ser). Is also able to aminoacylate tRNA(Sec) with serine, to form the misacylated tRNA L-seryl-tRNA(Sec), which will be further converted into selenocysteinyl-tRNA(Sec). The polypeptide is Serine--tRNA ligase (Erythrobacter litoralis (strain HTCC2594)).